The chain runs to 209 residues: Thiamine-phosphate synthase (209 aa).

4-amino-2-methyl-5-(diphosphooxymethyl)pyrimidine is bound by residues 40 to 44 and asparagine 72; that span reads QLREK. Mg(2+) is bound by residues aspartate 73 and aspartate 92. Serine 111 lines the 4-amino-2-methyl-5-(diphosphooxymethyl)pyrimidine pocket. 137-139 contacts 2-[(2R,5Z)-2-carboxy-4-methylthiazol-5(2H)-ylidene]ethyl phosphate; the sequence is TNS. Residue lysine 140 coordinates 4-amino-2-methyl-5-(diphosphooxymethyl)pyrimidine. 2-[(2R,5Z)-2-carboxy-4-methylthiazol-5(2H)-ylidene]ethyl phosphate-binding positions include glycine 167 and 187–188; that span reads IS.

The protein belongs to the thiamine-phosphate synthase family. Mg(2+) serves as cofactor.

It catalyses the reaction 2-[(2R,5Z)-2-carboxy-4-methylthiazol-5(2H)-ylidene]ethyl phosphate + 4-amino-2-methyl-5-(diphosphooxymethyl)pyrimidine + 2 H(+) = thiamine phosphate + CO2 + diphosphate. The enzyme catalyses 2-(2-carboxy-4-methylthiazol-5-yl)ethyl phosphate + 4-amino-2-methyl-5-(diphosphooxymethyl)pyrimidine + 2 H(+) = thiamine phosphate + CO2 + diphosphate. The catalysed reaction is 4-methyl-5-(2-phosphooxyethyl)-thiazole + 4-amino-2-methyl-5-(diphosphooxymethyl)pyrimidine + H(+) = thiamine phosphate + diphosphate. Its pathway is cofactor biosynthesis; thiamine diphosphate biosynthesis; thiamine phosphate from 4-amino-2-methyl-5-diphosphomethylpyrimidine and 4-methyl-5-(2-phosphoethyl)-thiazole: step 1/1. In terms of biological role, condenses 4-methyl-5-(beta-hydroxyethyl)thiazole monophosphate (THZ-P) and 2-methyl-4-amino-5-hydroxymethyl pyrimidine pyrophosphate (HMP-PP) to form thiamine monophosphate (TMP). The protein is Thiamine-phosphate synthase of Clostridium tetani (strain Massachusetts / E88).